The sequence spans 128 residues: Small ribosomal subunit protein bS6 (128 aa).

It belongs to the bacterial ribosomal protein bS6 family.

Its function is as follows. Binds together with bS18 to 16S ribosomal RNA. The sequence is that of Small ribosomal subunit protein bS6 (rpsF) from Thermotoga maritima (strain ATCC 43589 / DSM 3109 / JCM 10099 / NBRC 100826 / MSB8).